An 812-amino-acid polypeptide reads, in one-letter code: MKEFPKNYNFIESEKKWQKIWQEKQIYAYDENIAKDETFVVDTPPPTVSGQLHIGHVYSYTQTDFIVRFQRMMGKNIFYPMGFDDNGLPTERLVEKQRQVKAYNMGREEFINICNEVVASEEEKFRSLFNQIALSVDWNLEYQTISPLSRKISQMSFLDLVKKGEVYRNNQPILWDPVDGTALAQADIEDKEKTSFMNYITFKTEANDEFTIATTRPELLPACVAVFYHPDDKRYQHLAGKFAVTPLFNVKVPLLADPLVQQDKGTGLVMCCTFGDQTDITWWKTHNLPLNTIITKKGTIDFPHEIGIDGLKIKEARAKIIDILKEQELFVKQEEITQTVKCAERSGAPLEVLTVPQWFVKTISHKDELLKRANELNWHPKNMKIRLDNWINAISWDWCISRQRYFGVPFPVWYSKRIGEEGKILYADISQLPVDPLKDLPIGYSKYEVEPDLDVMDTWATSSVSPQLSTWGISDEFAVNKDRHGKLFPMDLRPQAHEIIRTWAFYTILKAHLHQNTLPWKNIMVSGWCLAEDRSKMSKSKGNVLVPEKLLEQYGSDVIRYWSANSKLGADTAYSEDVMKNGKRLVNKLWNAAKFVSQHFDKLSDEDKKTNLIDVKEKITHEFDQWIINKLVELVNNATNELQNYEYANAMHLTEKFFWSVFCDNYLEISKTRAYDEENKNPSGQYSSVLTLYHVMQTLLKLFAPFMPHITEELYQILYSENSIHIKGNWINYGNLNYKIDAKQPERLLEILDHVRKFKAEKNLSIKAEVQLLEVSGIELSKELTSDLKNVTSAKEVKFKPTNDEIKVSILT.

Positions 46 to 56 match the 'HIGH' region motif; it reads PTVSGQLHIGH. A 'KMSKS' region motif is present at residues 536–540; the sequence is KMSKS. Lys-539 contacts ATP.

This sequence belongs to the class-I aminoacyl-tRNA synthetase family. ValS type 2 subfamily. Monomer.

Its subcellular location is the cytoplasm. The enzyme catalyses tRNA(Val) + L-valine + ATP = L-valyl-tRNA(Val) + AMP + diphosphate. Catalyzes the attachment of valine to tRNA(Val). As ValRS can inadvertently accommodate and process structurally similar amino acids such as threonine, to avoid such errors, it has a 'posttransfer' editing activity that hydrolyzes mischarged Thr-tRNA(Val) in a tRNA-dependent manner. The sequence is that of Valine--tRNA ligase from Rickettsia bellii (strain RML369-C).